The primary structure comprises 422 residues: Protein TEX1 (422 aa).

5 WD repeats span residues 61–100, 158–197, 207–246, 251–290, and 293–332; these read ITPN…FDKS, GSKT…SSVC, EDND…LEVC, AHTG…CELI, and DLNS…LLHS. Positions 388–422 are disordered; the sequence is KRRKNNGGGNNHNKRTSKNTDRIGKDRPSRFNSKK. The span at 405 to 416 shows a compositional bias: basic and acidic residues; sequence KNTDRIGKDRPS.

Belongs to the THOC3 family. Component of the transcription/export (TREX) complex and the THO complex.

The protein resides in the nucleus. Component of the TREX complex, which operates in coupling transcription elongation to mRNA export. This Saccharomyces cerevisiae (strain ATCC 204508 / S288c) (Baker's yeast) protein is Protein TEX1 (TEX1).